Here is a 119-residue protein sequence, read N- to C-terminus: Small ribosomal subunit protein bS16 (119 aa).

Residues 89 to 103 (TTKSTKEKAATDKKA) are compositionally biased toward basic and acidic residues. Residues 89-119 (TTKSTKEKAATDKKAKVTKKPKTKTTTDVKK) form a disordered region.

The protein belongs to the bacterial ribosomal protein bS16 family.

The sequence is that of Small ribosomal subunit protein bS16 from Spiroplasma kunkelii.